The sequence spans 279 residues: Putative ABC transporter ATP-binding protein CA_C1368 (279 aa).

One can recognise an ABC transporter domain in the interval 4-239 (ISINNVDYIY…KKVLRNINLR (236 aa)). 37 to 44 (GPNGAGKS) provides a ligand contact to ATP.

Belongs to the ABC transporter superfamily.

It localises to the cell membrane. Functionally, probably part of an ABC transporter complex. Responsible for energy coupling to the transport system. The polypeptide is Putative ABC transporter ATP-binding protein CA_C1368 (Clostridium acetobutylicum (strain ATCC 824 / DSM 792 / JCM 1419 / IAM 19013 / LMG 5710 / NBRC 13948 / NRRL B-527 / VKM B-1787 / 2291 / W)).